The chain runs to 236 residues: uncharacterized protein (236 aa).

The region spanning 4-225 (LLEASIEQAG…TGLEGQSLLD (222 aa)) is the ABC transporter domain. An ATP-binding site is contributed by 38-45 (GANGAGKS).

The protein belongs to the ABC transporter superfamily.

This is an uncharacterized protein from Bacillus subtilis (strain 168).